A 648-amino-acid polypeptide reads, in one-letter code: Protein kinase YegI (648 aa).

The 288-residue stretch at threonine 15–leucine 302 folds into the Protein kinase domain. ATP-binding positions include leucine 21–valine 29 and lysine 41. The Proton acceptor role is filled by aspartate 143.

Autophosphorylated. Dephosphorylated by PphC.

Its function is as follows. Probable serine/threonine kinase. In Escherichia coli (strain K12), this protein is Protein kinase YegI (yegI).